The primary structure comprises 375 residues: Platelet-derived growth factor receptor-like protein (375 aa).

A signal peptide spans 1 to 17; it reads MKVWLLLGLLLLHEALG. The segment at 19 to 63 is disordered; sequence VAGQHPPKNKRPKEQGENRIKPTNKKAKPKIPKIKDRDTADSAPK. A compositionally biased stretch (basic residues) spans 40–50; it reads PTNKKAKPKIP. The region spanning 62-159 is the Ig-like C2-type 1 domain; that stretch reads PKSQSIMMQA…GYICRRDEAR (98 aa). A disulfide bond links Cys-96 and Cys-143. A glycan (N-linked (GlcNAc...) asparagine) is linked at Asn-219. The region spanning 272–375 is the Ig-like C2-type 2 domain; that stretch reads PSTTILASSN…TTVATTVEFS (104 aa). An intrachain disulfide couples Cys-293 to Cys-357.

As to quaternary structure, forms a complex composed of PDGFRL, TNK2 and GRB2.

Its subcellular location is the secreted. The protein is Platelet-derived growth factor receptor-like protein (Pdgfrl) of Rattus norvegicus (Rat).